Here is a 278-residue protein sequence, read N- to C-terminus: Orotidine 5'-phosphate decarboxylase (278 aa).

Lys95 acts as the Proton donor in catalysis.

It belongs to the OMP decarboxylase family. Type 2 subfamily.

The catalysed reaction is orotidine 5'-phosphate + H(+) = UMP + CO2. It participates in pyrimidine metabolism; UMP biosynthesis via de novo pathway; UMP from orotate: step 2/2. The sequence is that of Orotidine 5'-phosphate decarboxylase from Corynebacterium glutamicum (strain ATCC 13032 / DSM 20300 / JCM 1318 / BCRC 11384 / CCUG 27702 / LMG 3730 / NBRC 12168 / NCIMB 10025 / NRRL B-2784 / 534).